We begin with the raw amino-acid sequence, 415 residues long: Serine hydroxymethyltransferase 2 (415 aa).

(6S)-5,6,7,8-tetrahydrofolate contacts are provided by residues Leu-121 and 125–127; that span reads GHL. Lys-229 carries the N6-(pyridoxal phosphate)lysine modification.

The protein belongs to the SHMT family. As to quaternary structure, homodimer. It depends on pyridoxal 5'-phosphate as a cofactor.

The protein resides in the cytoplasm. It catalyses the reaction (6R)-5,10-methylene-5,6,7,8-tetrahydrofolate + glycine + H2O = (6S)-5,6,7,8-tetrahydrofolate + L-serine. It functions in the pathway one-carbon metabolism; tetrahydrofolate interconversion. It participates in amino-acid biosynthesis; glycine biosynthesis; glycine from L-serine: step 1/1. Its function is as follows. Catalyzes the reversible interconversion of serine and glycine with tetrahydrofolate (THF) serving as the one-carbon carrier. This reaction serves as the major source of one-carbon groups required for the biosynthesis of purines, thymidylate, methionine, and other important biomolecules. Also exhibits THF-independent aldolase activity toward beta-hydroxyamino acids, producing glycine and aldehydes, via a retro-aldol mechanism. The polypeptide is Serine hydroxymethyltransferase 2 (Bordetella bronchiseptica (strain ATCC BAA-588 / NCTC 13252 / RB50) (Alcaligenes bronchisepticus)).